The following is a 683-amino-acid chain: ATP-dependent zinc metalloprotease FtsH (683 aa).

Residues 1–43 (MEDKNIKDDEILDDQNDNQEDVQNQDEEKEIKPKKPKKKVYIS) form a disordered region. Residues 1–70 (MEDKNIKDDE…KNNNISFRVK (70 aa)) lie on the Cytoplasmic side of the membrane. The segment covering 10-28 (EILDDQNDNQEDVQNQDEE) has biased composition (acidic residues). The helical transmembrane segment at 71 to 91 (PPIFFFLILILMSTLFYFYGN) threads the bilayer. The Periplasmic portion of the chain corresponds to 92–174 (KTALFQEKRE…IVVLGTPVSS (83 aa)). Residues 175–195 (IITRAIFSFAPLFMLLFFFYF) traverse the membrane as a helical segment. Over 196-683 (INKKMMGSSG…LDDEQLEKYY (488 aa)) the chain is Cytoplasmic. 270 to 277 (GEPGTGKT) is a binding site for ATP. H494 contacts Zn(2+). E495 is an active-site residue. Zn(2+)-binding residues include H498 and D569.

The protein in the central section; belongs to the AAA ATPase family. This sequence in the C-terminal section; belongs to the peptidase M41 family. As to quaternary structure, homohexamer. Zn(2+) is required as a cofactor.

The protein localises to the cell inner membrane. In terms of biological role, acts as a processive, ATP-dependent zinc metallopeptidase for both cytoplasmic and membrane proteins. Plays a role in the quality control of integral membrane proteins. The sequence is that of ATP-dependent zinc metalloprotease FtsH from Streptobacillus moniliformis (strain ATCC 14647 / DSM 12112 / NCTC 10651 / 9901).